The chain runs to 296 residues: Bifunctional protein FolD (296 aa).

NADP(+) is bound by residues 166-168, S191, and I232; that span reads GRS.

It belongs to the tetrahydrofolate dehydrogenase/cyclohydrolase family. In terms of assembly, homodimer.

It carries out the reaction (6R)-5,10-methylene-5,6,7,8-tetrahydrofolate + NADP(+) = (6R)-5,10-methenyltetrahydrofolate + NADPH. It catalyses the reaction (6R)-5,10-methenyltetrahydrofolate + H2O = (6R)-10-formyltetrahydrofolate + H(+). Its pathway is one-carbon metabolism; tetrahydrofolate interconversion. In terms of biological role, catalyzes the oxidation of 5,10-methylenetetrahydrofolate to 5,10-methenyltetrahydrofolate and then the hydrolysis of 5,10-methenyltetrahydrofolate to 10-formyltetrahydrofolate. The polypeptide is Bifunctional protein FolD (Cereibacter sphaeroides (strain ATCC 17023 / DSM 158 / JCM 6121 / CCUG 31486 / LMG 2827 / NBRC 12203 / NCIMB 8253 / ATH 2.4.1.) (Rhodobacter sphaeroides)).